The sequence spans 211 residues: Large ribosomal subunit protein uL3 (211 aa).

The protein belongs to the universal ribosomal protein uL3 family. In terms of assembly, part of the 50S ribosomal subunit. Forms a cluster with proteins L14 and L19.

One of the primary rRNA binding proteins, it binds directly near the 3'-end of the 23S rRNA, where it nucleates assembly of the 50S subunit. The chain is Large ribosomal subunit protein uL3 from Geotalea daltonii (strain DSM 22248 / JCM 15807 / FRC-32) (Geobacter daltonii).